The sequence spans 427 residues: 3-phosphoshikimate 1-carboxyvinyltransferase (427 aa).

K22, S23, and R27 together coordinate 3-phosphoshikimate. A phosphoenolpyruvate-binding site is contributed by K22. Residues G96 and R124 each contribute to the phosphoenolpyruvate site. 3-phosphoshikimate is bound by residues S169, S170, Q171, S197, D313, N336, and K340. Q171 is a binding site for phosphoenolpyruvate. D313 serves as the catalytic Proton acceptor. 3 residues coordinate phosphoenolpyruvate: R344, R386, and K411.

This sequence belongs to the EPSP synthase family. As to quaternary structure, monomer.

The protein localises to the cytoplasm. It catalyses the reaction 3-phosphoshikimate + phosphoenolpyruvate = 5-O-(1-carboxyvinyl)-3-phosphoshikimate + phosphate. It functions in the pathway metabolic intermediate biosynthesis; chorismate biosynthesis; chorismate from D-erythrose 4-phosphate and phosphoenolpyruvate: step 6/7. In terms of biological role, catalyzes the transfer of the enolpyruvyl moiety of phosphoenolpyruvate (PEP) to the 5-hydroxyl of shikimate-3-phosphate (S3P) to produce enolpyruvyl shikimate-3-phosphate and inorganic phosphate. The polypeptide is 3-phosphoshikimate 1-carboxyvinyltransferase (Salmonella dublin (strain CT_02021853)).